The chain runs to 259 residues: Light-harvesting complex stress-related protein 3.1, chloroplastic (259 aa).

A chloroplast-targeting transit peptide spans 1–45 (MLANVVSRKASGLRQTPARATVAVKSVSGRRTTAAEPQTAAPVAA). Y51 contributes to the chlorophyll b binding site. Chlorophyll a-binding residues include F66, E87, and H90. Residue R92 participates in chlorophyll b binding. Residues 93–113 (VAMLAALGFVVGEQLQDFPLF) form a helical membrane-spanning segment. Q130 contributes to the chlorophyll a binding site. The chain crosses the membrane as a helical span at residues 137–157 (EPLLIAIGVAESYRVAVGWAT). Residues E147 and R150 each coordinate chlorophyll b. Residues K196, E197, N200, R202, and Q214 each coordinate chlorophyll a. The helical transmembrane segment at 203–223 (LAMIAIAAFVAQELVEQTEIF) threads the bilayer.

Belongs to the light-harvesting chlorophyll a/b-binding (LHC) protein family. Interacts with the photosystem II-light-harvesting complex II (PSII-LHCII) supercomplex to form PSII-LHCII-LHCSR3 supercomplex.

The protein localises to the plastid. It localises to the chloroplast thylakoid membrane. In terms of biological role, required for non-photochemical quenching (NPQ), a mechanism that converts and dissipates the harmful excess absorbed light energy into heat and protect the photosynthetic apparatus from photo-oxidative damage. NPQ includes dissipating excess light energy to heat (qE) and the reversible coupling of LHCII to photosystems (state transitions or qT), which are considered separate NPQ mechanisms. Is responsible for most of the excess light energy to heat dissipation (qE), also known as energy-dependent chlorophyll fluorescence quenching activity of chlorophyll excited states. Involved in a de-coupling and re-coupling of energy transfer to photosystem II (PSII) during qT. Binds chlorophyll a and b. Is able to sense luminal acidification of the thylakoid membranes, which occurs along with elevated electron flow caused by excess light. Establishes interactions with photosystem II (PSII) antenna components upon lumen acidification, and protonation of lumen-exposed, negatively charged residues both in LHCSR3 and in PSII antenna components. Mediates excitation energy transfer from light-harvesting complex II (LHCII) to photosystem I (PSI), rather than photosystem II (PSII), at low pH, which mimics the acidified lumen of the thylakoid membranes in high light-exposed chloroplasts. Activates PSI-dependent fluorescence quenching in addition to dissipating excitation energy in LHCII to avoid photooxidative stress under excess light. Contributes with PGRL1 to the regulation of electron flow upstream of photosystem I (PSI), and limits the accumulation of electrons on the PSI acceptor side, thus avoiding PSI photoinhibition. This chain is Light-harvesting complex stress-related protein 3.1, chloroplastic, found in Chlamydomonas reinhardtii (Chlamydomonas smithii).